The primary structure comprises 226 residues: UPF0502 protein azo0627 (226 aa).

The protein belongs to the UPF0502 family.

The protein is UPF0502 protein azo0627 of Azoarcus sp. (strain BH72).